A 493-amino-acid chain; its full sequence is Glutamyl-tRNA(Gln) amidotransferase subunit A (493 aa).

Active-site charge relay system residues include K78 and S158. S182 acts as the Acyl-ester intermediate in catalysis.

This sequence belongs to the amidase family. GatA subfamily. Heterotrimer of A, B and C subunits.

It catalyses the reaction L-glutamyl-tRNA(Gln) + L-glutamine + ATP + H2O = L-glutaminyl-tRNA(Gln) + L-glutamate + ADP + phosphate + H(+). Functionally, allows the formation of correctly charged Gln-tRNA(Gln) through the transamidation of misacylated Glu-tRNA(Gln) in organisms which lack glutaminyl-tRNA synthetase. The reaction takes place in the presence of glutamine and ATP through an activated gamma-phospho-Glu-tRNA(Gln). In Rickettsia canadensis (strain McKiel), this protein is Glutamyl-tRNA(Gln) amidotransferase subunit A.